An 89-amino-acid chain; its full sequence is Small ribosomal subunit protein uS14 (89 aa).

The protein belongs to the universal ribosomal protein uS14 family. As to quaternary structure, part of the 30S ribosomal subunit. Contacts proteins S3 and S10.

In terms of biological role, binds 16S rRNA, required for the assembly of 30S particles and may also be responsible for determining the conformation of the 16S rRNA at the A site. The polypeptide is Small ribosomal subunit protein uS14 (Phytoplasma australiense).